A 419-amino-acid chain; its full sequence is O-methyltransferase gsfB (419 aa).

S-adenosyl-L-methionine contacts are provided by residues 255 to 256 (GG), aspartate 278, 300 to 301 (DF), and arginine 316. The active-site Proton acceptor is the histidine 320.

Belongs to the class I-like SAM-binding methyltransferase superfamily. Cation-independent O-methyltransferase family.

The catalysed reaction is 2-(2,4-dihydroxy-6-oxidobenzoyl)-5-hydroxy-3-methylbenzenolate + S-adenosyl-L-methionine = griseophenone D + S-adenosyl-L-homocysteine + H(+). The protein operates within secondary metabolite biosynthesis; terpenoid biosynthesis. O-methyltransferase; part of the gene cluster that mediates the biosynthesis of griseofulvin, an important antifungal drug that has been in use for a long time for treating dermatophyte infections. The first step of the pathway is the formation of the heptaketide backbone by gsfA which is initiated by priming with acetyl-CoA, followed by sequential condensations of 6 malonyl-CoA units. The resulting benzophenone can undergo a spontaneous dehydration to form norlichexanthone. However, the true precursor for the griseofulvin biosynthesis is not norlichexanthone, but the heptaketide benzophenone that is O-methylated at 3-OH by gsfB to produce griseophenone D which is further methylated at 9-OH by gsfC to yield griseophenone C. Griseophenone C is then substrate of halogenase gsfI which is responsible for the regio-specific chlorination at the C13 position to form griseophenone B. The cytochrome P450 gsfF catalyzes the coupling of orcinol and phloroglucinol rings in griseophenone B to form desmethyl-dehydrogriseofulvin A which is further methylated at 5-OH by gsfD to yield dehydrogriseofulvin. Finally, gsfE performs stereospecific reduction of enone 18 of dehydrogriseofulvin to afford the final product griseofulvin. The polypeptide is O-methyltransferase gsfB (Penicillium aethiopicum).